The chain runs to 475 residues: MTPGTQSLFFLLLLLTVLTVVTGSGHASSTPGGEKETSATQRSSMPSSTEKKVVSMTSSVLSSHSPGSGSSTTQGQDVSLAPATEPASGSAATWGQDVTSVPVTRPAPGSTTSPAQDVTSAPDTRPALGSTAPPVHGVTSAPDTRPTLGSTAPPVHGVTSAPDTRPTLGSTAPPVHNVTSASGSASGSASTLVHNGTSARATTTPASKSTPFSIPSHHSDTPTTLTSHSTKTDASSTHHSTVSPLTSSNHSTSPQLSIGVSFFFLSFHISNLQFNSSLEDPSTNYYQELQRDISELILQIYKQGDFLGVSNIKFRPGSVVVQSTLAFREGTTNVHDVEAQFNQHKTEAASRYNLTISDVSVSDVPFPFSAQSGAGVPGWGIALLVLVCVLVALAIVYLIALAVCQCRRKNYGQLDIFPARDAYHPMSEYPTYHTHGRYVPPSSTNRSPYEKVSEGNGGSSLSYTNPAVAATSANL.

The first 23 residues, 1–23 (MTPGTQSLFFLLLLLTVLTVVTG), serve as a signal peptide directing secretion. Positions 23-252 (GSGHASSTPG…SPLTSSNHST (230 aa)) are disordered. Over 24–380 (SGHASSTPGG…QSGAGVPGWG (357 aa)) the chain is Extracellular. The span at 38–48 (SATQRSSMPSS) shows a compositional bias: polar residues. A compositionally biased stretch (low complexity) spans 54 to 75 (VSMTSSVLSSHSPGSGSSTTQG). Repeat copies occupy residues 86–105 (PASGSAATWGQDVTSVPVTR), 106–125 (PAPGSTTSPAQDVTSAPDTR), 126–145 (PALGSTAPPVHGVTSAPDTR), 146–165 (PTLGSTAPPVHGVTSAPDTR), and 166–185 (PTLGSTAPPVHNVTSASGSA). Residues 86–185 (PASGSAATWG…HNVTSASGSA (100 aa)) are 5 X 20 AA approximate tandem repeats. Residues 90–102 (SAATWGQDVTSVP) are compositionally biased toward polar residues. O-linked (GalNAc...) threonine glycosylation is found at threonine 93 and threonine 99. The O-linked (GalNAc...) serine glycan is linked to serine 100. Threonine 104 carries an O-linked (GalNAc...) threonine glycan. Residues 109 to 122 (GSTTSPAQDVTSAP) show a composition bias toward polar residues. Asparagine 177 is a glycosylation site (N-linked (GlcNAc...) asparagine). Over residues 180 to 190 (SASGSASGSAS) the composition is skewed to low complexity. Polar residues-rich tracts occupy residues 191–213 (TLVHNGTSARATTTPASKSTPFS) and 233–252 (DASSTHHSTVSPLTSSNHST). Residues asparagine 195, asparagine 249, asparagine 275, and asparagine 353 are each glycosylated (N-linked (GlcNAc...) asparagine). In terms of domain architecture, SEA spans 259–368 (GVSFFFLSFH…VSVSDVPFPF (110 aa)). The helical transmembrane segment at 381 to 401 (IALLVLVCVLVALAIVYLIAL) threads the bilayer. Residues 402–475 (AVCQCRRKNY…PAVAATSANL (74 aa)) are Cytoplasmic-facing. S-palmitoyl cysteine attachment occurs at residues cysteine 404 and cysteine 406. The interaction with P53 stretch occupies residues 412 to 448 (GQLDIFPARDAYHPMSEYPTYHTHGRYVPPSSTNRSP). Tyrosine 423 carries the post-translational modification Phosphotyrosine; by PDGFR. Residues 423-426 (YHPM) carry the Interaction with GRB2 motif. Tyrosine 432 carries the phosphotyrosine modification. Residues 435–460 (HGRYVPPSSTNRSPYEKVSEGNGGSS) are disordered. Tyrosine 438 is subject to Phosphotyrosine; by PDGFR. The tract at residues 443 to 450 (STNRSPYE) is required for interaction with GSK3B. Phosphothreonine; by PKC/PRKCD is present on threonine 444. At serine 447 the chain carries Phosphoserine; by GSK3-beta. At tyrosine 449 the chain carries Phosphotyrosine; by CSK, EGFR and SRC. Positions 449–452 (YEKV) match the Interaction with SRC and ESR1 motif. The required for interaction with beta- and gamma-catenins stretch occupies residues 453-461 (SEGNGGSSL). Residue tyrosine 463 is modified to Phosphotyrosine. A Required for interaction with AP1S2 motif is present at residues 463–466 (YTNP).

As to quaternary structure, the alpha subunit forms a tight, non-covalent heterodimeric complex with the proteolytically-released beta-subunit. Binds directly the SH2 domain of GRB2, and forms a MUC1/GRB2/SOS1 complex involved in RAS signaling. The cytoplasmic tail (MUC1CT) interacts with several proteins such as SRC, CTNNB1 and ERBs. Interaction with the SH2 domain of CSK decreases interaction with GSK3B. Interacts with CTNNB1/beta-catenin and JUP/gamma-catenin and promotes cell adhesion. Interaction with JUP/gamma-catenin is induced by heregulin. Binds PRKCD, ERBB2, ERBB3 and ERBB4. Heregulin (HRG) stimulates the interaction with ERBB2 and, to a much lesser extent, the interaction with ERBB3 and ERBB4. Interacts with P53 in response to DNA damage. Interacts with KLF4. Interacts with estrogen receptor alpha/ESR1, through its DNA-binding domain, and stimulates its transcription activity. Binds ADAM17. In terms of processing, probably both N- and O-glycosylated (in repeat region). Proteolytic cleavage in the SEA domain occurs in the endoplasmic reticulum by an autoproteolytic mechanism and requires the full-length SEA domain as well as requiring a Ser, Thr or Cys residue at the P + 1 site. Ectodomain shedding is mediated by ADAM17 in uterine epithelial cells. Post-translationally, dual palmitoylation on cysteine residues in the CQC motif is required for recycling from endosomes back to the plasma membrane. In terms of processing, phosphorylated on tyrosines and serine residues in the C-terminal. Phosphorylation on tyrosines in the C-terminal increases the nuclear location of MUC1 and beta-catenin. Phosphorylation by PKC delta induces binding of MUC1 to beta-catenin/CTNNB1 and thus decreases the formation of the beta-catenin/E-cadherin complex. Src-mediated phosphorylation inhibits interaction with GSK3B. Csk- or Src- or EGFR-mediated phosphorylation on Tyr-449 increases binding to beta-catenin/CTNNB1. GSK3B-mediated phosphorylation on Ser-447 decreases this interaction but restores the formation of the beta-cadherin/E-cadherin complex. On T-cell receptor activation, phosphorylated by LCK. PDGFR-mediated phosphorylation increases nuclear colocalization of MUC1CT and CTNNB1.

The protein localises to the apical cell membrane. Its subcellular location is the cell membrane. It localises to the cytoplasm. The protein resides in the nucleus. Its function is as follows. The alpha subunit has cell adhesive properties. Can act both as an adhesion and an anti-adhesion protein. May provide a protective layer on epithelial cells against bacterial and enzyme attack. In terms of biological role, the beta subunit contains a C-terminal domain which is involved in cell signaling, through phosphorylations and protein-protein interactions. Modulates signaling in ERK, Src and NF-kappaB pathways. In activated T-cells, influences directly or indirectly the Ras/MAPK pathway. Promotes tumor progression. Regulates P53-mediated transcription and determines cell fate in the genotoxic stress response. Binds, together with KLF4, the PE21 promoter element of P53 and represses P53 activity. The chain is Mucin-1 (MUC1) from Hylobates lar (Lar gibbon).